We begin with the raw amino-acid sequence, 283 residues long: Cyclin-C (283 aa).

The 99-residue stretch at 46 to 144 (NVIQALGEHL…VLECEFYLLE (99 aa)) folds into the Cyclin N-terminal domain. The segment at 252–283 (TILSKMPKPKPPPNSEGEQGPNGSQNSSYSQS) is disordered. Residues 272–283 (PNGSQNSSYSQS) are compositionally biased toward polar residues. At Ser275 the chain carries Phosphoserine.

The protein belongs to the cyclin family. Cyclin C subfamily. Component of the Mediator complex, which is composed of MED1, MED4, MED6, MED7, MED8, MED9, MED10, MED11, MED12, MED13, MED13L, MED14, MED15, MED16, MED17, MED18, MED19, MED20, MED21, MED22, MED23, MED24, MED25, MED26, MED27, MED29, MED30, MED31, CCNC, CDK8 and CDC2L6/CDK11. The MED12, MED13, CCNC and CDK8 subunits form a distinct module termed the CDK8 module. Mediator containing the CDK8 module is less active than Mediator lacking this module in supporting transcriptional activation. Individual preparations of the Mediator complex lacking one or more distinct subunits have been variously termed ARC, CRSP, DRIP, PC2, SMCC and TRAP. The cylin/CDK pair formed by CCNC/CDK8 also associates with the large subunit of RNA polymerase II.

The protein resides in the nucleus. Functionally, component of the Mediator complex, a coactivator involved in regulated gene transcription of nearly all RNA polymerase II-dependent genes. Mediator functions as a bridge to convey information from gene-specific regulatory proteins to the basal RNA polymerase II transcription machinery. Mediator is recruited to promoters by direct interactions with regulatory proteins and serves as a scaffold for the assembly of a functional preinitiation complex with RNA polymerase II and the general transcription factors. Binds to and activates cyclin-dependent kinase CDK8 that phosphorylates the CTD (C-terminal domain) of the large subunit of RNA polymerase II (RNAp II), which may inhibit the formation of a transcription initiation complex. This chain is Cyclin-C (CCNC), found in Bos taurus (Bovine).